The sequence spans 102 residues: uncharacterized protein (102 aa).

A disordered region spans residues M1–G43. Over residues I9–S21 the composition is skewed to polar residues. The span at G25 to G43 shows a compositional bias: low complexity.

This is an uncharacterized protein from Saccharomyces cerevisiae (strain ATCC 204508 / S288c) (Baker's yeast).